Reading from the N-terminus, the 139-residue chain is D-ribose pyranase (139 aa).

His20 (proton donor) is an active-site residue. Substrate-binding positions include Asp28, His106, and 128–130; that span reads YAN.

Belongs to the RbsD / FucU family. RbsD subfamily. In terms of assembly, homodecamer.

Its subcellular location is the cytoplasm. The catalysed reaction is beta-D-ribopyranose = beta-D-ribofuranose. It functions in the pathway carbohydrate metabolism; D-ribose degradation; D-ribose 5-phosphate from beta-D-ribopyranose: step 1/2. Functionally, catalyzes the interconversion of beta-pyran and beta-furan forms of D-ribose. The sequence is that of D-ribose pyranase from Actinobacillus pleuropneumoniae serotype 7 (strain AP76).